The following is a 3011-amino-acid chain: Chromodomain-helicase-DNA-binding protein 7 (3011 aa).

Disordered stretches follow at residues 90-146 (ISNA…SMWG), 159-189 (PYQQ…QHMQ), 202-422 (MQQH…GSAG), 502-806 (QQLP…VEKI), and 941-960 (PEME…SESS). Residues 159-168 (PYQQQQQQPQ) are compositionally biased toward low complexity. Over residues 169-179 (PTQPPQAPSGP) the composition is skewed to pro residues. Residues 203–215 (QQHGQPQQQRMNQ) are compositionally biased toward low complexity. Composition is skewed to polar residues over residues 216–227 (FSQGQEGLNQGN), 241–258 (VPQQ…SVQQ), 291–347 (QTLN…NQSV), and 374–393 (GSLN…QGTY). A compositionally biased stretch (low complexity) spans 502-516 (QQLPSQQQSFQQQMP). 2 stretches are compositionally biased toward polar residues: residues 576–586 (TQVSGPNTQLV) and 630–641 (DSQNLSRNSVDC). Basic and acidic residues-rich tracts occupy residues 655–684 (KKEP…EPKE) and 718–730 (KGKE…DLDK). Basic residues predominate over residues 747-759 (QKRRSSRQVKRKR). Residues 760 to 770 (YTEDLEFKISD) are compositionally biased toward basic and acidic residues. A compositionally biased stretch (polar residues) spans 783 to 795 (SPSNTSQSEQQES). Chromo domains lie at 801-868 (PVVE…GQNK) and 883-948 (VEID…RVER). The region spanning 981–1155 (LFNWYNTRNC…FSLLHFLEPG (175 aa)) is the Helicase ATP-binding domain. An ATP-binding site is contributed by 994–1001 (DEMGLGKT). Positions 1106 to 1109 (DEAH) match the DEAH box motif. One can recognise a Helicase C-terminal domain in the interval 1295–1465 (LIDKLLPKLK…LSKKEIEDLL (171 aa)). Disordered regions lie at residues 1577–1602 (FSDL…SQGY), 1836–1869 (GTDM…KDEI), and 2136–2291 (GTGN…GFYM). Residues 1585–1597 (EEKPSTKPRRPQD) show a composition bias toward basic and acidic residues. The segment covering 1845–1856 (DGGEFDREDEDP) has biased composition (acidic residues). Positions 1857-1867 (EYKPTRTPFKD) are enriched in basic and acidic residues. Over residues 2136–2145 (GTGNANTVSS) the composition is skewed to polar residues. Basic and acidic residues-rich tracts occupy residues 2166-2207 (QEEK…KQDC) and 2218-2238 (CELK…SEKG). The span at 2239 to 2253 (SEEDEEEKLDDDDKS) shows a compositional bias: acidic residues. The stretch at 2403-2433 (RRRRRKIEIEAERAAKRRNLMEMVAQLRESQ) forms a coiled coil. Phosphoserine is present on serine 2561. Disordered stretches follow at residues 2825-2900 (TTGN…LPTN) and 2946-3011 (GSNE…ENDE). Basic and acidic residues predominate over residues 2841 to 2851 (GASKAEEKKNE). Polar residues predominate over residues 2864 to 2877 (DTVSATDSANGSVS). The span at 2878-2893 (AATAATTATATTTTTT) shows a compositional bias: low complexity. The span at 2948–2964 (NEEKATDKTEGTAFKDE) shows a compositional bias: basic and acidic residues. Composition is skewed to acidic residues over residues 2965-2974 (ENLEGSDAEE) and 2984-3011 (ILED…ENDE).

This sequence belongs to the SNF2/RAD54 helicase family. Expressed in the neural epithelium, otic placodes, optic placodes, branchial arches, and the olfactory placodes,.

It localises to the nucleus. The catalysed reaction is ATP + H2O = ADP + phosphate + H(+). Its function is as follows. ATP-dependent chromatin-remodeling factor, slides nucleosomes along DNA; nucleosome sliding requires ATP.Probable transcription regulator. Maybe involved in the in 45S precursor rRNA production. The protein is Chromodomain-helicase-DNA-binding protein 7 (CHD7) of Gallus gallus (Chicken).